An 815-amino-acid polypeptide reads, in one-letter code: Calpain-3 (815 aa).

Residues 7 to 36 form a disordered region; the sequence is ASVAPRTAAEPRSPGPVPHPAQSKATEAGG. A Calpain catalytic domain is found at 74–417; sequence LYVDPEFPPD…FTKLEICNLT (344 aa). Catalysis depends on residues cysteine 129, histidine 334, and asparagine 358. Positions 418–586 are domain III; that stretch reads ADALQSDKLQ…KRNLSEEVEN (169 aa). A linker region spans residues 587–649; that stretch reads TISVDRPVPI…QESEEQQQFR (63 aa). The interval 605 to 646 is disordered; it reads SNKELGVDQESEEGKGKTSPDKQEQSPQPQPGSSDQESEEQQ. Residues 616 to 628 are compositionally biased toward basic and acidic residues; that stretch reads EEGKGKTSPDKQE. Residues 629–639 are compositionally biased toward low complexity; that stretch reads QSPQPQPGSSD. 4 consecutive EF-hand domains span residues 643–677, 686–719, 716–751, and 781–815; these read EEQQQFRNIFKQIAGDDMEICADELKKVLNTVVNK, FTLESCRSMIALMDTDGSGKLNLQEFHHLWNKIK, NKIKAWQKIFKHYDTDQSGTINSYEMRNAVNDAGFH, and VRLEGMFRAFHAFDKDGDGIIKLNVLEWLQLTMYA. The domain IV stretch occupies residues 650 to 815; it reads NIFKQIAGDD…LEWLQLTMYA (166 aa). Ca(2+)-binding residues include alanine 656, aspartate 659, glutamate 661, glutamate 666, aspartate 699, aspartate 701, serine 703, lysine 705, glutamate 710, aspartate 729, aspartate 731, serine 733, threonine 735, glutamate 740, aspartate 794, aspartate 796, aspartate 798, and isoleucine 800.

Belongs to the peptidase C2 family. In terms of assembly, homodimer; via EF-hand domain 4. Interacts with TTN/titin. Interacts with CMYA5; this interaction, which results in CMYA5 proteolysis, may protect CAPN3 from autolysis. Interacts with SIMC1. Interacts with UTP25; the interaction is required for CAPN3 translocation to the nucleolus.

The protein resides in the cytoplasm. It localises to the nucleus. It is found in the nucleolus. The catalysed reaction is Broad endopeptidase activity.. Activated by micromolar concentrations of calcium and inhibited by calpastatin. Its function is as follows. Calcium-regulated non-lysosomal thiol-protease. Proteolytically cleaves CTBP1. Mediates, with UTP25, the proteasome-independent degradation of p53/TP53. This chain is Calpain-3 (CAPN3), found in Macaca fascicularis (Crab-eating macaque).